The sequence spans 262 residues: Shikimate dehydrogenase (NADP(+)) (262 aa).

Residues 15-17 (SRS) and threonine 62 contribute to the shikimate site. The active-site Proton acceptor is the lysine 66. Glutamate 78 lines the NADP(+) pocket. Residues asparagine 87 and aspartate 102 each contribute to the shikimate site. Residues 126–130 (GAGGA), 150–155 (NRTLAR), and methionine 214 contribute to the NADP(+) site. Residue tyrosine 216 participates in shikimate binding. NADP(+) is bound at residue glycine 236.

It belongs to the shikimate dehydrogenase family. Homodimer.

The catalysed reaction is shikimate + NADP(+) = 3-dehydroshikimate + NADPH + H(+). It functions in the pathway metabolic intermediate biosynthesis; chorismate biosynthesis; chorismate from D-erythrose 4-phosphate and phosphoenolpyruvate: step 4/7. Involved in the biosynthesis of the chorismate, which leads to the biosynthesis of aromatic amino acids. Catalyzes the reversible NADPH linked reduction of 3-dehydroshikimate (DHSA) to yield shikimate (SA). The chain is Shikimate dehydrogenase (NADP(+)) from Acinetobacter baumannii (strain AB0057).